Consider the following 264-residue polypeptide: Zinc import ATP-binding protein ZnuC (264 aa).

An ABC transporter domain is found at 11 to 226 (IELQNIKVVF…PTFIHLFGDQ (216 aa)). Position 43–50 (43–50 (GPNGGGKS)) interacts with ATP.

The protein belongs to the ABC transporter superfamily. Zinc importer (TC 3.A.1.15.5) family. As to quaternary structure, the complex is composed of two ATP-binding proteins (ZnuC), two transmembrane proteins (ZnuB) and a solute-binding protein (ZnuA).

The protein localises to the cell inner membrane. It catalyses the reaction Zn(2+)(out) + ATP(in) + H2O(in) = Zn(2+)(in) + ADP(in) + phosphate(in) + H(+)(in). Part of the ABC transporter complex ZnuABC involved in zinc import. Responsible for energy coupling to the transport system. The chain is Zinc import ATP-binding protein ZnuC from Mannheimia succiniciproducens (strain KCTC 0769BP / MBEL55E).